Consider the following 652-residue polypeptide: Capsid protein (652 aa).

Polar residues predominate over residues 1-11; sequence MSSNDSAQTRN. Residues 1–70 are disordered; that stretch reads MSSNDSAQTR…SSSDPPSASG (70 aa). Low complexity predominate over residues 34 to 47; that stretch reads TNGPTTNSTSGSVG.

Its subcellular location is the virion. Functionally, the capsid protein self-assembles to form an icosahedral capsid with a T=2 symmetry made of 120 subunits. This is Capsid protein from Atkinsonella hypoxylon virus (isolate 2H) (AhV).